A 467-amino-acid polypeptide reads, in one-letter code: F-box protein pof9 (467 aa).

One can recognise an F-box domain in the interval 3–49 (KSPFLELSYDILLEISTYLDYKDIVHLSETCKSLSYVFDDKTIWHRF). 3 RCC1 repeats span residues 77-131 (RGYA…LLNE), 302-354 (ETFT…YLTS), and 355-417 (DHSI…AAGG).

Interacts with skp1.

The protein localises to the cytoplasm. Its subcellular location is the nucleus. In Schizosaccharomyces pombe (strain 972 / ATCC 24843) (Fission yeast), this protein is F-box protein pof9 (pof9).